We begin with the raw amino-acid sequence, 602 residues long: MSIISMHVGILNRPAAYNHLRNLDRRASKPRHVSSTAAATRLRVSCATQLEIKSVDETRRSGNYNPTAWDFNYIQSLDNQYKKERYSTRHAELTVQVKKLLEEEMEAVQKLELIEDLKNLGISYPFKDNIQQILNQIYNEHKCCHNSEVEEKDLYFTALRFRLLRQQGFEVSQEVFDHFKNEKGTDFKPNLADDTKGLLQLYEASFLLREAEDTLELARQFSTKLLQKKVDENGDDKIEDNLLLWIRRSLELPLHWRVQRLEARGFLDAYVRRPDMNPIVFELAKLDFNITQATQQEELKDLSRWWNSTGLAEKLPFARDRVVESYFWAMGTFEPHQYGYQRELVAKIIALATVVDDVYDVYGTLEELELFTDAIRRWDRESIDQLPYYMQLCFLTVNNFVFELAHDVLKDKSFNCLPHLQRSWLDLAEAYLVEAKWYHSRYTPSLEEYLNIARVSVTCPTIVSQMYFALPIPIEKPVIEIMYKYHDILYLSGMLLRLPDDLGTASFELKRGDVQKAVQCYMKERNVPENEAREHVKFLIREASKQINTAMATDCPFTEDFAVAAANLGRVANFVYVDGDGFGVQHSKIYEQIGTLMFEPYP.

Residues Asp356, Asp360, Asp500, Thr504, and Glu508 each contribute to the Mg(2+) site. The short motif at 356–360 (DDVYD) is the DDXXD motif element.

It belongs to the terpene synthase family. It depends on Mg(2+) as a cofactor. Requires Mn(2+) as cofactor.

The catalysed reaction is (2E)-geranyl diphosphate = (4R)-limonene + diphosphate. Functionally, catalyzes the formation of (R)-(+)-limonene, terpinolene, (1R,5S)-(+)-camphene, (1R,5R)-(+)-alpha-pinene, beta-myrcene and traces of alpha-phellandrene. The protein is (R)-limonene synthase of Lavandula angustifolia (Lavender).